A 114-amino-acid polypeptide reads, in one-letter code: MAQGQGFGFGLGKIKELQDAFQKAQQVQQGAKVLQEELENMEIPGQSENGLVTVYLSGNQEPRGIEIDPALLSQDLEIVAGSILEAMKVAYDASTETMRSKMEELTSGLNIPSM.

It belongs to the YbaB/EbfC family. Homodimer.

It is found in the cytoplasm. The protein resides in the nucleoid. Binds to DNA and alters its conformation. May be involved in regulation of gene expression, nucleoid organization and DNA protection. This chain is Nucleoid-associated protein MAE_23910, found in Microcystis aeruginosa (strain NIES-843 / IAM M-2473).